A 300-amino-acid polypeptide reads, in one-letter code: Protein Bel-1 (300 aa).

A disordered region spans residues Met-1–Arg-50. Residues Val-10–Ser-23 are compositionally biased toward polar residues. Residues Ser-89–His-200 mediate DNA binding. Residues Phe-209–Leu-244 are disordered. Residues Lys-211 to Arg-222 are compositionally biased toward basic residues. The short motif at Lys-214–Arg-223 is the Nuclear localization signal element. Positions Ser-224 to Leu-300 are transactivation domain. A compositionally biased stretch (polar residues) spans Asn-227–Met-237.

Homodimer or homomultimer. Forms complexes with the host nuclear factors NFIA, NFIB, NFIC or NFIX.

The protein localises to the host nucleus. Transcriptional transactivator that activates the viral internal promoter (IP), thereby enhancing its own expression. This transactivation is repressed by nuclear factor I. Also transactivates the long terminal repeat (LTR) promoter, thereby inducing structural gene expression, initiating the late phase of infection. It is therefore a key regulator of viral gene expression. It directly binds to and activates DNA target sites of viral promoters and those of distinct cellular genes. Required for viral replication. The sequence is that of Protein Bel-1 (bel1) from Human spumaretrovirus (SFVcpz(hu)).